The chain runs to 123 residues: cAMP-responsive element-binding protein-like 2 (123 aa).

Residues 1-24 (MDDSKVVGGKVKKPGKRGRKPAKI) are disordered. Residues 10–21 (KVKKPGKRGRKP) are compositionally biased toward basic residues. Positions 23 to 86 (KIDLKAKLER…MAMDQGKIPS (64 aa)) constitute a bZIP domain. The segment at 29 to 60 (KLERSRQSARECRARKKLRYQYLEELVSSRER) is basic motif. The segment at 62-69 (ICALREEL) is leucine-zipper. The disordered stretch occupies residues 93–123 (TGEEQNKSQQNSSRHPKAGKTDANTNSLVGN). The segment covering 114-123 (DANTNSLVGN) has biased composition (polar residues).

Belongs to the bZIP family. ATF subfamily. As to quaternary structure, interacts with CREB1; regulates CREB1 phosphorylation, stability and transcriptional activity. Post-translationally, phosphorylated by AMPK.

It is found in the nucleus. Its function is as follows. Probable regulator of CREB1 transcriptional activity which is involved in adipose cells differentiation. May also play a regulatory role in the cell cycle. This Rattus norvegicus (Rat) protein is cAMP-responsive element-binding protein-like 2 (Crebl2).